The primary structure comprises 106 residues: Large ribosomal subunit protein eL42 (106 aa).

The protein belongs to the eukaryotic ribosomal protein eL42 family.

The chain is Large ribosomal subunit protein eL42 (RPL44) from Cyberlindnera jadinii (Torula yeast).